The primary structure comprises 458 residues: Nuclear transcription factor Y subunit gamma (458 aa).

Low complexity predominate over residues 305–315 (QQQFSQFTDGQ). The tract at residues 305-379 (QQQFSQFTDG…QQSSTSPPPS (75 aa)) is disordered. Residues 339-351 (TGNSTPCTSSLPT) are compositionally biased toward polar residues.

The protein belongs to the NFYC/HAP5 subunit family. Heterotrimeric transcription factor composed of three components, NF-YA, NF-YB and NF-YC. NF-YB and NF-YC must interact and dimerize for NF-YA association and DNA binding.

It is found in the nucleus. Its function is as follows. Component of the sequence-specific heterotrimeric transcription factor (NF-Y) which specifically recognizes a 5'-CCAAT-3' box motif found in the promoters of its target genes. NF-Y can function as both an activator and a repressor, depending on its interacting cofactors. In Homo sapiens (Human), this protein is Nuclear transcription factor Y subunit gamma (NFYC).